Consider the following 219-residue polypeptide: MIWNHGKMILEALLLASPEPLTIKRIAEVIGLDERDAALLMADLQKDYEAPHRGLAIREMAGGYVLTTRPEAAEYVERLLQPKSRGLSHAALETLAIIAYRQPITKAEIENVRGVKVDRALETLLERGLIEDKGRKEAPGRPILYGTTAEFLRYFGLRELSELPPVEIDTSEPGLIVPTRTGGGEAEREVQASLFAGGEEPSAEAADGGAGESTHGEEE.

The tract at residues 193-219 is disordered; sequence SLFAGGEEPSAEAADGGAGESTHGEEE. Residues 196–207 are compositionally biased toward low complexity; it reads AGGEEPSAEAAD.

This sequence belongs to the ScpB family. Homodimer. Homodimerization may be required to stabilize the binding of ScpA to the Smc head domains. Component of a cohesin-like complex composed of ScpA, ScpB and the Smc homodimer, in which ScpA and ScpB bind to the head domain of Smc. The presence of the three proteins is required for the association of the complex with DNA.

The protein localises to the cytoplasm. Its function is as follows. Participates in chromosomal partition during cell division. May act via the formation of a condensin-like complex containing Smc and ScpA that pull DNA away from mid-cell into both cell halves. The polypeptide is Segregation and condensation protein B (Symbiobacterium thermophilum (strain DSM 24528 / JCM 14929 / IAM 14863 / T)).